The sequence spans 635 residues: 1-deoxy-D-xylulose-5-phosphate synthase (635 aa).

Thiamine diphosphate contacts are provided by residues His72 and 113–115; that span reads GHA. Asp144 provides a ligand contact to Mg(2+). Thiamine diphosphate-binding positions include 145 to 146, Asn174, Tyr286, and Glu369; that span reads GA. Asn174 serves as a coordination point for Mg(2+).

The protein belongs to the transketolase family. DXPS subfamily. In terms of assembly, homodimer. It depends on Mg(2+) as a cofactor. Thiamine diphosphate serves as cofactor.

It catalyses the reaction D-glyceraldehyde 3-phosphate + pyruvate + H(+) = 1-deoxy-D-xylulose 5-phosphate + CO2. Its pathway is metabolic intermediate biosynthesis; 1-deoxy-D-xylulose 5-phosphate biosynthesis; 1-deoxy-D-xylulose 5-phosphate from D-glyceraldehyde 3-phosphate and pyruvate: step 1/1. In terms of biological role, catalyzes the acyloin condensation reaction between C atoms 2 and 3 of pyruvate and glyceraldehyde 3-phosphate to yield 1-deoxy-D-xylulose-5-phosphate (DXP). This chain is 1-deoxy-D-xylulose-5-phosphate synthase, found in Gloeothece citriformis (strain PCC 7424) (Cyanothece sp. (strain PCC 7424)).